The primary structure comprises 156 residues: SsrA-binding protein (156 aa).

This sequence belongs to the SmpB family.

It is found in the cytoplasm. Its function is as follows. Required for rescue of stalled ribosomes mediated by trans-translation. Binds to transfer-messenger RNA (tmRNA), required for stable association of tmRNA with ribosomes. tmRNA and SmpB together mimic tRNA shape, replacing the anticodon stem-loop with SmpB. tmRNA is encoded by the ssrA gene; the 2 termini fold to resemble tRNA(Ala) and it encodes a 'tag peptide', a short internal open reading frame. During trans-translation Ala-aminoacylated tmRNA acts like a tRNA, entering the A-site of stalled ribosomes, displacing the stalled mRNA. The ribosome then switches to translate the ORF on the tmRNA; the nascent peptide is terminated with the 'tag peptide' encoded by the tmRNA and targeted for degradation. The ribosome is freed to recommence translation, which seems to be the essential function of trans-translation. The polypeptide is SsrA-binding protein (Thermoanaerobacter pseudethanolicus (strain ATCC 33223 / 39E) (Clostridium thermohydrosulfuricum)).